The primary structure comprises 336 residues: Holliday junction branch migration complex subunit RuvB (336 aa).

The tract at residues 4 to 184 (ADRLISASGG…FGIVQRLEFY (181 aa)) is large ATPase domain (RuvB-L). ATP is bound by residues isoleucine 23, arginine 24, glycine 65, lysine 68, threonine 69, threonine 70, 131–133 (EDY), arginine 174, tyrosine 184, and arginine 221. Threonine 69 provides a ligand contact to Mg(2+). Residues 185 to 255 (NVKDLTDIVA…IAARAMDMLD (71 aa)) form a small ATPAse domain (RuvB-S) region. The tract at residues 258–336 (NEGFDFMDRK…HFGLQRPDEG (79 aa)) is head domain (RuvB-H). 2 residues coordinate DNA: arginine 313 and arginine 318.

It belongs to the RuvB family. As to quaternary structure, homohexamer. Forms an RuvA(8)-RuvB(12)-Holliday junction (HJ) complex. HJ DNA is sandwiched between 2 RuvA tetramers; dsDNA enters through RuvA and exits via RuvB. An RuvB hexamer assembles on each DNA strand where it exits the tetramer. Each RuvB hexamer is contacted by two RuvA subunits (via domain III) on 2 adjacent RuvB subunits; this complex drives branch migration. In the full resolvosome a probable DNA-RuvA(4)-RuvB(12)-RuvC(2) complex forms which resolves the HJ.

It is found in the cytoplasm. The enzyme catalyses ATP + H2O = ADP + phosphate + H(+). In terms of biological role, the RuvA-RuvB-RuvC complex processes Holliday junction (HJ) DNA during genetic recombination and DNA repair, while the RuvA-RuvB complex plays an important role in the rescue of blocked DNA replication forks via replication fork reversal (RFR). RuvA specifically binds to HJ cruciform DNA, conferring on it an open structure. The RuvB hexamer acts as an ATP-dependent pump, pulling dsDNA into and through the RuvAB complex. RuvB forms 2 homohexamers on either side of HJ DNA bound by 1 or 2 RuvA tetramers; 4 subunits per hexamer contact DNA at a time. Coordinated motions by a converter formed by DNA-disengaged RuvB subunits stimulates ATP hydrolysis and nucleotide exchange. Immobilization of the converter enables RuvB to convert the ATP-contained energy into a lever motion, pulling 2 nucleotides of DNA out of the RuvA tetramer per ATP hydrolyzed, thus driving DNA branch migration. The RuvB motors rotate together with the DNA substrate, which together with the progressing nucleotide cycle form the mechanistic basis for DNA recombination by continuous HJ branch migration. Branch migration allows RuvC to scan DNA until it finds its consensus sequence, where it cleaves and resolves cruciform DNA. This chain is Holliday junction branch migration complex subunit RuvB, found in Aeromonas hydrophila subsp. hydrophila (strain ATCC 7966 / DSM 30187 / BCRC 13018 / CCUG 14551 / JCM 1027 / KCTC 2358 / NCIMB 9240 / NCTC 8049).